We begin with the raw amino-acid sequence, 189 residues long: FUN14 domain-containing protein 2 (189 aa).

The Cytoplasmic segment spans residues 1 to 80 (METSAPRAGS…GQESGPSAEK (80 aa)). A phosphoserine mark is found at Ser-10 and Ser-53. Residues 81 to 101 (YSVATQLFIGGVTGWCTGFIF) traverse the membrane as a helical segment. Topologically, residues 102–107 (QKVGKL) are mitochondrial intermembrane. A helical membrane pass occupies residues 108–128 (AATAVGGGFFLLQLANHTGYI). Over 129–164 (KVDWQRVEKDMKKAKEQLKIRKSNQIPTEVRSKAEE) the chain is Cytoplasmic. Phosphoserine is present on Ser-151. The chain crosses the membrane as a helical span at residues 165 to 185 (VVSFVKKNVLVTGGFFGGFLL). Topologically, residues 186-189 (GMAS) are mitochondrial intermembrane.

Belongs to the FUN14 family. Highly expressed in platelets (at protein level).

Its subcellular location is the mitochondrion outer membrane. The protein localises to the nucleus. Its function is as follows. Binds directly and specifically 1,2-Diacyl-sn-glycero-3-phospho-(1'-myo-inositol-3',4',5'-bisphosphate) (PIP3) leading to the recruitment of PIP3 to mitochondria and may play a role in the regulation of the platelet activation via AKT/GSK3B/cGMP signaling pathways. May act as transcription factor that regulates SREBP1 (isoform SREBP-1C) expression in order to modulate triglyceride (TG) homeostasis in hepatocytes. The protein is FUN14 domain-containing protein 2 of Homo sapiens (Human).